Here is a 122-residue protein sequence, read N- to C-terminus: Beta-2-microglobulin (122 aa).

The first 22 residues, 1–22 (MMARIFILALLGQLCFLPYLDA), serve as a signal peptide directing secretion. Residues 27 to 115 (PKVQVYSRHP…HLTLQEPKVV (89 aa)) enclose the Ig-like C1-type domain. Residues Cys47 and Cys102 are joined by a disulfide bond.

The protein belongs to the beta-2-microglobulin family. In terms of assembly, heterodimer of an alpha chain and a beta chain. Beta-2-microglobulin is the beta-chain of major histocompatibility complex class I molecules.

The protein resides in the secreted. Functionally, component of the class I major histocompatibility complex (MHC). Involved in the presentation of peptide antigens to the immune system. In Trichosurus vulpecula (Brush-tailed possum), this protein is Beta-2-microglobulin (B2M).